A 220-amino-acid polypeptide reads, in one-letter code: uncharacterized protein (220 aa).

Belongs to the DadA oxidoreductase family. It depends on FAD as a cofactor.

This is an uncharacterized protein from Halorhodospira halophila (Ectothiorhodospira halophila).